The primary structure comprises 205 residues: Protein GrpE (205 aa).

The interval 1-40 is disordered; the sequence is MSRKLHEEELTPEGMDAAQNADPAGDPVSENEGALPAAEP.

Belongs to the GrpE family. In terms of assembly, homodimer.

It localises to the cytoplasm. Functionally, participates actively in the response to hyperosmotic and heat shock by preventing the aggregation of stress-denatured proteins, in association with DnaK and GrpE. It is the nucleotide exchange factor for DnaK and may function as a thermosensor. Unfolded proteins bind initially to DnaJ; upon interaction with the DnaJ-bound protein, DnaK hydrolyzes its bound ATP, resulting in the formation of a stable complex. GrpE releases ADP from DnaK; ATP binding to DnaK triggers the release of the substrate protein, thus completing the reaction cycle. Several rounds of ATP-dependent interactions between DnaJ, DnaK and GrpE are required for fully efficient folding. This Acidobacterium capsulatum (strain ATCC 51196 / DSM 11244 / BCRC 80197 / JCM 7670 / NBRC 15755 / NCIMB 13165 / 161) protein is Protein GrpE.